The primary structure comprises 308 residues: GTPase Era (308 aa).

Residues 7 to 181 enclose the Era-type G domain; the sequence is RCGWVALIGP…LRLIVGYMPE (175 aa). A G1 region spans residues 15–22; it reads GPPNAGKS. Residue 15–22 participates in GTP binding; sequence GPPNAGKS. Positions 41 to 45 are G2; the sequence is QTTRN. The segment at 62–65 is G3; the sequence is DTPG. Residues 62–66 and 130–133 contribute to the GTP site; these read DTPGI and NKID. The G4 stretch occupies residues 130-133; it reads NKID. Residues 160-162 are G5; that stretch reads ASA. The KH type-2 domain occupies 212 to 290; sequence LRQELPYSTA…HLELWVKVRE (79 aa).

Belongs to the TRAFAC class TrmE-Era-EngA-EngB-Septin-like GTPase superfamily. Era GTPase family. Monomer.

It is found in the cytoplasm. The protein localises to the cell inner membrane. An essential GTPase that binds both GDP and GTP, with rapid nucleotide exchange. Plays a role in 16S rRNA processing and 30S ribosomal subunit biogenesis and possibly also in cell cycle regulation and energy metabolism. The protein is GTPase Era of Nitratidesulfovibrio vulgaris (strain DP4) (Desulfovibrio vulgaris).